A 128-amino-acid polypeptide reads, in one-letter code: Aspartate 1-decarboxylase (128 aa).

S25 acts as the Schiff-base intermediate with substrate; via pyruvic acid in catalysis. S25 carries the post-translational modification Pyruvic acid (Ser). Position 57 (T57) interacts with substrate. Catalysis depends on Y58, which acts as the Proton donor. Position 73–75 (73–75 (GAA)) interacts with substrate.

Belongs to the PanD family. In terms of assembly, heterooctamer of four alpha and four beta subunits. Pyruvate serves as cofactor. Post-translationally, is synthesized initially as an inactive proenzyme, which is activated by self-cleavage at a specific serine bond to produce a beta-subunit with a hydroxyl group at its C-terminus and an alpha-subunit with a pyruvoyl group at its N-terminus.

Its subcellular location is the cytoplasm. It catalyses the reaction L-aspartate + H(+) = beta-alanine + CO2. It functions in the pathway cofactor biosynthesis; (R)-pantothenate biosynthesis; beta-alanine from L-aspartate: step 1/1. Functionally, catalyzes the pyruvoyl-dependent decarboxylation of aspartate to produce beta-alanine. The protein is Aspartate 1-decarboxylase of Caldicellulosiruptor bescii (strain ATCC BAA-1888 / DSM 6725 / KCTC 15123 / Z-1320) (Anaerocellum thermophilum).